A 213-amino-acid chain; its full sequence is ATP phosphoribosyltransferase (213 aa).

It belongs to the ATP phosphoribosyltransferase family. Short subfamily. In terms of assembly, heteromultimer composed of HisG and HisZ subunits.

Its subcellular location is the cytoplasm. The enzyme catalyses 1-(5-phospho-beta-D-ribosyl)-ATP + diphosphate = 5-phospho-alpha-D-ribose 1-diphosphate + ATP. It functions in the pathway amino-acid biosynthesis; L-histidine biosynthesis; L-histidine from 5-phospho-alpha-D-ribose 1-diphosphate: step 1/9. Catalyzes the condensation of ATP and 5-phosphoribose 1-diphosphate to form N'-(5'-phosphoribosyl)-ATP (PR-ATP). Has a crucial role in the pathway because the rate of histidine biosynthesis seems to be controlled primarily by regulation of HisG enzymatic activity. This chain is ATP phosphoribosyltransferase, found in Teredinibacter turnerae (strain ATCC 39867 / T7901).